The following is a 544-amino-acid chain: Chaperonin GroEL (544 aa).

Residues 30 to 33, Lys51, 87 to 91, Gly415, 479 to 481, and Asp495 each bind ATP; these read TLGP, DGTTT, and NAA.

Belongs to the chaperonin (HSP60) family. As to quaternary structure, forms a cylinder of 14 subunits composed of two heptameric rings stacked back-to-back. Interacts with the co-chaperonin GroES.

Its subcellular location is the cytoplasm. It carries out the reaction ATP + H2O + a folded polypeptide = ADP + phosphate + an unfolded polypeptide.. Together with its co-chaperonin GroES, plays an essential role in assisting protein folding. The GroEL-GroES system forms a nano-cage that allows encapsulation of the non-native substrate proteins and provides a physical environment optimized to promote and accelerate protein folding. This is Chaperonin GroEL from Acinetobacter baylyi (strain ATCC 33305 / BD413 / ADP1).